The primary structure comprises 798 residues: Protocadherin beta-14 (798 aa).

The N-terminal stretch at 1 to 26 (MEIRGALDLRKRQVLIFLVLLGLSRA) is a signal peptide. Residues 27–686 (GTESAHYSVA…APAQAQADSL (660 aa)) lie on the Extracellular side of the membrane. Cadherin domains are found at residues 35–133 (VAEE…SPTF), 138–242 (ILIK…APEF), 247–347 (YEVQ…PPEV), 352–451 (ITKR…APTF), and 456–561 (YTLF…SPFV). C96 and C102 form a disulfide bridge. The N-linked (GlcNAc...) asparagine glycan is linked to N169. 5 N-linked (GlcNAc...) asparagine glycosylation sites follow: N359, N418, N436, N487, and N567. One can recognise a Cadherin 6 domain in the interval 568–671 (GSAPCTELVP…LVDGFSQPYL (104 aa)). A helical transmembrane segment spans residues 687–711 (TVYLVVALASVSSLFLFSVLLFVAV). The Cytoplasmic segment spans residues 712–798 (RLCRRSRAAS…FRNSFGLNIQ (87 aa)).

It localises to the cell membrane. Potential calcium-dependent cell-adhesion protein. May be involved in the establishment and maintenance of specific neuronal connections in the brain. The polypeptide is Protocadherin beta-14 (PCDHB14) (Homo sapiens (Human)).